We begin with the raw amino-acid sequence, 800 residues long: Probable replication endonuclease from prophage-like region (800 aa).

Residues Tyr-503 and Tyr-507 each act as O-(5'-phospho-DNA)-tyrosine intermediate in the active site.

The protein belongs to the phage GPA family.

Its function is as follows. Possible endonuclease which induces a single-strand cut and initiates DNA replication. The protein is Probable replication endonuclease from prophage-like region of Salmonella paratyphi A (strain ATCC 9150 / SARB42).